Here is a 718-residue protein sequence, read N- to C-terminus: SANT and BTB domain regulator of class switch recombination (718 aa).

One can recognise an SANT domain in the interval 21-59 (DMILYPLIGIPQTINWETIARLVPGLTPKECAKRFDELK). The segment covering 118–134 (ASTRNCSSESENCTTHN) has biased composition (polar residues). The interval 118–142 (ASTRNCSSESENCTTHNGGEMTEES) is disordered. The BTB domain maps to 147–255 (MVIHVCDEAK…QCIQYCHKNM (109 aa)). The segment covering 555–576 (SEEEEYTTGSEVTEDEVGDEEE) has biased composition (acidic residues). Disordered regions lie at residues 555-622 (SEEE…SPFV) and 692-718 (SVPV…GRPA). Positions 580-595 (KQRKKEKPKKFTRQPK) are enriched in basic residues. The span at 604 to 615 (QRKEKALEKSAS) shows a compositional bias: basic and acidic residues.

The protein belongs to the KIAA1841 family. In terms of assembly, homodimer. Interacts (via the BTB domain) with HDAC1 and NCOR2.

Functionally, negatively regulates class switch recombination or isotype switching in splenic B-cells. This Homo sapiens (Human) protein is SANT and BTB domain regulator of class switch recombination.